Reading from the N-terminus, the 487-residue chain is Adenylosuccinate synthetase, chloroplastic (487 aa).

The N-terminal 46 residues, 1-46, are a transit peptide targeting the chloroplast; it reads MSLSTVNHAAAAAAAAGSGKSFSAAAPAAPSVRLPRTRAPAAAAVS. GTP is bound by residues 74–80 and 102–104; these read GDEGKGK and GHT. Asp-75 (proton acceptor) is an active-site residue. Mg(2+)-binding residues include Asp-75 and Gly-102. IMP is bound by residues 75-78, 100-103, Thr-192, Arg-206, Gln-286, Thr-301, and Arg-365; these read DEGK and NAGH. Catalysis depends on His-103, which acts as the Proton donor. A substrate-binding site is contributed by 361-367; the sequence is TTTGRPR. GTP-binding positions include Arg-367, 393–395, and 476–478; these read KLD and GVG.

The protein belongs to the adenylosuccinate synthetase family. In terms of assembly, homodimer. The cofactor is Mg(2+).

It is found in the plastid. Its subcellular location is the chloroplast. The catalysed reaction is IMP + L-aspartate + GTP = N(6)-(1,2-dicarboxyethyl)-AMP + GDP + phosphate + 2 H(+). It participates in purine metabolism; AMP biosynthesis via de novo pathway; AMP from IMP: step 1/2. Its function is as follows. Plays an important role in the de novo pathway and in the salvage pathway of purine nucleotide biosynthesis. Catalyzes the first committed step in the biosynthesis of AMP from IMP. The sequence is that of Adenylosuccinate synthetase, chloroplastic from Oryza sativa subsp. indica (Rice).